We begin with the raw amino-acid sequence, 402 residues long: Phosphomevalonate dehydratase large subunit (402 aa).

(R)-5-phosphomevalonate contacts are provided by glycine 48, alanine 49, serine 50, asparagine 79, and proline 80. Cysteine 122 provides a ligand contact to [4Fe-4S] cluster. (R)-5-phosphomevalonate contacts are provided by glutamate 145 and serine 146. [4Fe-4S] cluster contacts are provided by cysteine 297 and cysteine 356. Residue lysine 377 participates in (R)-5-phosphomevalonate binding.

This sequence belongs to the AcnX type II large subunit family. As to quaternary structure, heterodimer composed of a large subunit (PMDh-L) and a small subunit (PMDh-S). [4Fe-4S] cluster is required as a cofactor.

The catalysed reaction is (R)-5-phosphomevalonate = (2E)-3-methyl-5-phosphooxypent-2-enoate + H2O. Its pathway is isoprenoid biosynthesis; isopentenyl diphosphate biosynthesis via mevalonate pathway. With respect to regulation, neither the addition of 1 mM Mg(2+) nor 1 mM Mn(2+) has a significant effect on the activity, whereas Zn(2+) causes almost complete inactivation. Strongly inhibited by H(2)O(2), but not by EDTA or iodoacetamide. Functionally, component of a hydro-lyase that catalyzes the dehydration of mevalonate 5-phosphate (MVA5P) to form trans-anhydromevalonate 5-phosphate (tAHMP). Involved in the archaeal mevalonate (MVA) pathway, which provides fundamental precursors for isoprenoid biosynthesis, such as isopentenyl diphosphate (IPP) and dimethylallyl diphosphate (DMAPP). This is Phosphomevalonate dehydratase large subunit from Aeropyrum pernix (strain ATCC 700893 / DSM 11879 / JCM 9820 / NBRC 100138 / K1).